The sequence spans 161 residues: Nucleotide-binding protein swp_1151 (161 aa).

The protein belongs to the YajQ family.

Functionally, nucleotide-binding protein. The chain is Nucleotide-binding protein swp_1151 from Shewanella piezotolerans (strain WP3 / JCM 13877).